The primary structure comprises 128 residues: L-ectoine synthase (128 aa).

Belongs to the ectoine synthase family.

It catalyses the reaction (2S)-4-acetamido-2-aminobutanoate = L-ectoine + H2O. The protein operates within amine and polyamine biosynthesis; ectoine biosynthesis; L-ectoine from L-aspartate 4-semialdehyde: step 3/3. Its function is as follows. Catalyzes the circularization of gamma-N-acetyl-alpha,gamma-diaminobutyric acid (ADABA) to ectoine (1,4,5,6-tetrahydro-2-methyl-4-pyrimidine carboxylic acid), which is an excellent osmoprotectant. The sequence is that of L-ectoine synthase from Vibrio campbellii (strain ATCC BAA-1116).